The primary structure comprises 1069 residues: Leucine--tRNA ligase (1069 aa).

The disordered stretch occupies residues 19–53 (TAEHGTGAANATASPSGAVPPSGATATAGTGDEPG). Residues 107-118 (PYPSGTGLHVGH) carry the 'HIGH' region motif. Residues 823 to 836 (GRFTHHGAPVDRRS) show a composition bias toward basic and acidic residues. Residues 823–846 (GRFTHHGAPVDRRSGKMGKSLKNS) form a disordered region. The 'KMSKS' region motif lies at 838–842 (KMGKS). Lys841 is an ATP binding site.

This sequence belongs to the class-I aminoacyl-tRNA synthetase family.

The protein resides in the cytoplasm. It carries out the reaction tRNA(Leu) + L-leucine + ATP = L-leucyl-tRNA(Leu) + AMP + diphosphate. In Frankia alni (strain DSM 45986 / CECT 9034 / ACN14a), this protein is Leucine--tRNA ligase.